A 321-amino-acid polypeptide reads, in one-letter code: Thymidylate synthase (321 aa).

Positions 1–32 (MVLTPTKDGPDQESMPLPADNGESPSKQQAPV) are disordered. Phosphoserine occurs at positions 24 and 26. Tyr-39 is subject to Phosphotyrosine. DUMP is bound by residues Arg-56 and 181–182 (RR). Catalysis depends on Cys-201, which acts as the Nucleophile. A Phosphotyrosine modification is found at Tyr-208. Phosphoserine is present on Ser-210. DUMP is bound by residues 223–226 (RSAD), Asn-234, and 264–266 (HVY). Asp-226 is a binding site for (6R)-5,10-methylene-5,6,7,8-tetrahydrofolate. A (6R)-5,10-methylene-5,6,7,8-tetrahydrofolate-binding site is contributed by Ala-320.

Belongs to the thymidylate synthase family. As to quaternary structure, homodimer.

The catalysed reaction is dUMP + (6R)-5,10-methylene-5,6,7,8-tetrahydrofolate = 7,8-dihydrofolate + dTMP. Its pathway is pyrimidine metabolism; dTTP biosynthesis. The sequence is that of Thymidylate synthase (Ts) from Drosophila melanogaster (Fruit fly).